A 536-amino-acid chain; its full sequence is G-protein coupled receptor Mth2 (536 aa).

At 1–210 the chain is on the extracellular side; the sequence is MAERDHYHTI…DDNSTVKIIN (210 aa). 5 cysteine pairs are disulfide-bonded: Cys-17-Cys-71, Cys-73-Cys-78, Cys-82-Cys-177, Cys-83-Cys-96, and Cys-138-Cys-197. 2 N-linked (GlcNAc...) asparagine glycosylation sites follow: Asn-24 and Asn-33. N-linked (GlcNAc...) asparagine glycosylation is found at Asn-103, Asn-113, Asn-118, Asn-159, Asn-184, and Asn-203. A helical transmembrane segment spans residues 211-231; the sequence is AYAMMFSIPFMMLTIAVYLLI. Topologically, residues 232–241 are cytoplasmic; that stretch reads PELRNQHGKS. The helical transmembrane segment at 242–262 threads the bilayer; sequence LVCYLVGLTVGYTSLCYVQLY. The Extracellular segment spans residues 263 to 273; that stretch reads QVDATGDACKV. A helical transmembrane segment spans residues 274–294; it reads FGYTAYFFFMGAYMWLSVISF. Topologically, residues 295–314 are cytoplasmic; the sequence is DLWHNFRGTRGINRFQEKKR. A helical membrane pass occupies residues 315-335; sequence FLFYSLYSWGIAVVFLAFTYI. Residues 336-365 lie on the Extracellular side of the membrane; sequence AQELTNLPAYLKPGIGDGVYCWLDMSNWAA. A helical membrane pass occupies residues 366–386; sequence MIYFYGPILVIVVANTIMFIM. At 387–417 the chain is on the cytoplasmic side; that stretch reads TAIKIHGVQREMARIIASENSTKNLRTEKDK. A helical transmembrane segment spans residues 418–438; the sequence is FGLFLRLFLIMGITWLTELIS. Residues 439–449 lie on the Extracellular side of the membrane; it reads YFVGSDKGWSK. Residues 450–470 traverse the membrane as a helical segment; it reads LFYISDLANAMQGFLIFMLFV. The Cytoplasmic portion of the chain corresponds to 471–536; sequence MKKKVKHLIT…VDPQKTTIFR (66 aa). Residues 487–506 form a disordered region; sequence RDGSNQRQSQYSTKTTSSSV. The span at 492-505 shows a compositional bias: low complexity; that stretch reads QRQSQYSTKTTSSS.

The protein belongs to the G-protein coupled receptor 2 family. Mth subfamily. In terms of assembly, homodimer.

The protein resides in the cell membrane. Involved in biological aging and stress response. Essential for adult survival. This chain is G-protein coupled receptor Mth2 (mth2), found in Drosophila yakuba (Fruit fly).